Reading from the N-terminus, the 252-residue chain is Adenosylcobinamide-GDP ribazoletransferase (252 aa).

7 helical membrane-spanning segments follow: residues 4 to 24 (LLLL…LPYI), 35 to 55 (LVPM…GGMN), 65 to 85 (SALV…DGAM), 102 to 122 (VMAD…ILLL), 178 to 198 (LLPG…VNNH), 201 to 221 (LITV…AAWF), and 232 to 252 (TYGA…TILT).

It belongs to the CobS family. The cofactor is Mg(2+).

It localises to the cell inner membrane. The catalysed reaction is alpha-ribazole + adenosylcob(III)inamide-GDP = adenosylcob(III)alamin + GMP + H(+). It carries out the reaction alpha-ribazole 5'-phosphate + adenosylcob(III)inamide-GDP = adenosylcob(III)alamin 5'-phosphate + GMP + H(+). It functions in the pathway cofactor biosynthesis; adenosylcobalamin biosynthesis; adenosylcobalamin from cob(II)yrinate a,c-diamide: step 7/7. In terms of biological role, joins adenosylcobinamide-GDP and alpha-ribazole to generate adenosylcobalamin (Ado-cobalamin). Also synthesizes adenosylcobalamin 5'-phosphate from adenosylcobinamide-GDP and alpha-ribazole 5'-phosphate. This is Adenosylcobinamide-GDP ribazoletransferase from Trichormus variabilis (strain ATCC 29413 / PCC 7937) (Anabaena variabilis).